A 749-amino-acid chain; its full sequence is Metabotropic glutamate receptor-like protein M (749 aa).

An N-terminal signal peptide occupies residues 1–22; the sequence is MIKLILSLIFLIICCNINPSES. At 23–385 the chain is on the extracellular side; it reads FKLITLTTGP…KIEFSSSVQK (363 aa). Asn67, Asn164, Asn257, Asn271, and Asn345 each carry an N-linked (GlcNAc...) asparagine glycan. The chain crosses the membrane as a helical span at residues 386–406; it reads GFSIVSGCLIAFVILMMVGIV. The Cytoplasmic portion of the chain corresponds to 407-419; the sequence is YYKDTPSIRSASP. A helical transmembrane segment spans residues 420–440; the sequence is IFLNFSLIGGIIIYIGIIIWV. Over 441–456 the chain is Extracellular; it reads GPISTHQCNARFWLVT. Residues 457-477 traverse the membrane as a helical segment; that stretch reads LGFSTLIGSLVVKNFRIWLIF. Over 478–492 the chain is Cytoplasmic; it reads DNPELKAIKITNYQL. Residues 493 to 513 form a helical membrane-spanning segment; sequence FPWVGLCLVINIVLMAILTSV. The Extracellular portion of the chain corresponds to 514–544; it reads GDLKAIEAQGIDSLGKYEYMTVCKMNSAGAS. Residues 545–565 form a helical membrane-spanning segment; it reads TLYSILAYFAALLLVGVFVSW. The Cytoplasmic portion of the chain corresponds to 566-579; sequence KIRIVDIEEFNESK. A helical transmembrane segment spans residues 580 to 600; the sequence is AIANTLYAVSFCLFVIVPLMI. Topologically, residues 601 to 609 are extracellular; the sequence is SPQEKQSET. The chain crosses the membrane as a helical span at residues 610-630; it reads IILCVAGLFITTAALLIVFIP. The Cytoplasmic segment spans residues 631–749; it reads KFWRVFIYGK…EEPVKTESQE (119 aa). Residues 658-749 are disordered; it reads ARAESLSKNS…EEPVKTESQE (92 aa). Residues 698–716 are compositionally biased toward polar residues; the sequence is SSLSEPNKPTKNNDGNVNV. A compositionally biased stretch (acidic residues) spans 725–740; sequence FTDDTISEFDENEVNE.

In the N-terminal section; belongs to the BMP lipoprotein family. This sequence in the C-terminal section; belongs to the G-protein coupled receptor 3 family. GABA-B receptor subfamily.

The protein localises to the membrane. The sequence is that of Metabotropic glutamate receptor-like protein M (grlM) from Dictyostelium discoideum (Social amoeba).